The chain runs to 313 residues: Ribosomal protein L11 methyltransferase (313 aa).

S-adenosyl-L-methionine is bound by residues Thr-161, Gly-182, Asp-204, and Asn-247.

Belongs to the methyltransferase superfamily. PrmA family.

The protein localises to the cytoplasm. It carries out the reaction L-lysyl-[protein] + 3 S-adenosyl-L-methionine = N(6),N(6),N(6)-trimethyl-L-lysyl-[protein] + 3 S-adenosyl-L-homocysteine + 3 H(+). Functionally, methylates ribosomal protein L11. In Halalkalibacterium halodurans (strain ATCC BAA-125 / DSM 18197 / FERM 7344 / JCM 9153 / C-125) (Bacillus halodurans), this protein is Ribosomal protein L11 methyltransferase.